The chain runs to 452 residues: tRNA modification GTPase MnmE (452 aa).

Residues R28, E85, and K124 each contribute to the (6S)-5-formyl-5,6,7,8-tetrahydrofolate site. Positions G220–G378 constitute a TrmE-type G domain. N230 provides a ligand contact to K(+). GTP is bound by residues N230–S235, T249–T255, D274–G277, and S359–R361. A Mg(2+)-binding site is contributed by S234. The K(+) site is built by T249, V251, and T254. T255 is a Mg(2+) binding site. Residue K452 coordinates (6S)-5-formyl-5,6,7,8-tetrahydrofolate.

This sequence belongs to the TRAFAC class TrmE-Era-EngA-EngB-Septin-like GTPase superfamily. TrmE GTPase family. In terms of assembly, homodimer. Heterotetramer of two MnmE and two MnmG subunits. The cofactor is K(+).

The protein localises to the cytoplasm. In terms of biological role, exhibits a very high intrinsic GTPase hydrolysis rate. Involved in the addition of a carboxymethylaminomethyl (cmnm) group at the wobble position (U34) of certain tRNAs, forming tRNA-cmnm(5)s(2)U34. This chain is tRNA modification GTPase MnmE, found in Azoarcus sp. (strain BH72).